Here is a 176-residue protein sequence, read N- to C-terminus: Urease accessory protein UreE (176 aa).

Residues Ala147–His176 are disordered.

The protein belongs to the UreE family.

Its subcellular location is the cytoplasm. Involved in urease metallocenter assembly. Binds nickel. Probably functions as a nickel donor during metallocenter assembly. In Alcanivorax borkumensis (strain ATCC 700651 / DSM 11573 / NCIMB 13689 / SK2), this protein is Urease accessory protein UreE.